Consider the following 174-residue polypeptide: MPAYHSSFLSLTDVPTTGNIAMLPLKTKFRGPAYPADESQMDIIDECIGLFRANCFFRNFEIKGPADRTLIYGTLFISECLGRVNGLNYRDAERQLNSLALENFSIPGSAGFPLNALYAPPLSPQDAEIMRTYLTQFRQELAYRLLSHVYATEKDHPSKWWTCFSKRRFMNKAL.

The protein belongs to the ARPC3 family. As to quaternary structure, component of the Arp2/3 complex composed of arp2, act2, arc1/p41-ARC, arc2/p34-ARC, arc3/p21-ARC, arc4/p20-ARC and arc5/p16-ARC.

The protein localises to the cytoplasm. The protein resides in the cytoskeleton. Its subcellular location is the actin patch. Functions as a component of the Arp2/3 complex which is involved in regulation of actin polymerization and together with an activating nucleation-promoting factor (NPF) mediates the formation of branched actin networks. This is Actin-related protein 2/3 complex subunit 3 (arc3) from Schizosaccharomyces pombe (strain 972 / ATCC 24843) (Fission yeast).